The primary structure comprises 308 residues: Aspartate carbamoyltransferase catalytic subunit (308 aa).

Arg-59 and Thr-60 together coordinate carbamoyl phosphate. Lys-87 is a binding site for L-aspartate. Positions 109, 139, and 142 each coordinate carbamoyl phosphate. L-aspartate is bound by residues Arg-172 and Arg-224. Carbamoyl phosphate-binding residues include Ala-265 and Pro-266.

The protein belongs to the aspartate/ornithine carbamoyltransferase superfamily. ATCase family. In terms of assembly, heterododecamer (2C3:3R2) of six catalytic PyrB chains organized as two trimers (C3), and six regulatory PyrI chains organized as three dimers (R2).

It carries out the reaction carbamoyl phosphate + L-aspartate = N-carbamoyl-L-aspartate + phosphate + H(+). Its pathway is pyrimidine metabolism; UMP biosynthesis via de novo pathway; (S)-dihydroorotate from bicarbonate: step 2/3. Functionally, catalyzes the condensation of carbamoyl phosphate and aspartate to form carbamoyl aspartate and inorganic phosphate, the committed step in the de novo pyrimidine nucleotide biosynthesis pathway. This is Aspartate carbamoyltransferase catalytic subunit from Streptococcus mutans serotype c (strain ATCC 700610 / UA159).